A 165-amino-acid polypeptide reads, in one-letter code: Peptidyl-prolyl cis-trans isomerase A (165 aa).

N-acetylmethionine is present on Met1. Position 2 is an N-acetylvaline; in Peptidyl-prolyl cis-trans isomerase A, N-terminally processed (Val2). Residues 7 to 163 (FFDIAVDGEP…KKITIADCGQ (157 aa)) form the PPIase cyclophilin-type domain. The residue at position 28 (Lys28) is an N6-acetyllysine; alternate. A Glycyl lysine isopeptide (Lys-Gly) (interchain with G-Cter in SUMO2); alternate cross-link involves residue Lys28. Lys28 is covalently cross-linked (Glycyl lysine isopeptide (Lys-Gly) (interchain with G-Cter in ubiquitin); alternate). 2 positions are modified to N6-acetyllysine: Lys44 and Lys76. A Phosphoserine modification is found at Ser77. Lys82 is modified (N6-acetyllysine; alternate). A Glycyl lysine isopeptide (Lys-Gly) (interchain with G-Cter in SUMO2); alternate cross-link involves residue Lys82. The residue at position 93 (Thr93) is a Phosphothreonine. N-linked (GlcNAc...) asparagine glycosylation occurs at Asn108. N6-acetyllysine is present on residues Lys125, Lys131, and Lys133.

The protein belongs to the cyclophilin-type PPIase family. PPIase A subfamily. As to quaternary structure, interacts with protein phosphatase PPP3CA/calcineurin A. Interacts with isoform 2 of BSG/CD147. Interacts with FOXO1; the interaction promotes FOXO1 dephosphorylation, nuclear accumulation and transcriptional activity. Interacts with integrin ITGA2B:ITGB3; the interaction is ROS and peptidyl-prolyl cis-trans isomerase (PPIase) activity-dependent and is increased in the presence of thrombin. Interacts with MAP3K5. Interacts with TARDBP; the interaction is dependent on the RNA-binding activity of TARDBP and the PPIase activity of PPIA/CYPA and the acetylation of PPIA/CYPA at Lys-125 favors the interaction. Interacts with HNRNPA1, HNRNPA2B1, HNRNPC, RBMX, HNRNPK and HNRNPM. In terms of processing, acetylation at Lys-125 markedly inhibits catalysis of cis to trans isomerization. PPIA acetylation also antagonizes the immunosuppressive effects of cyclosporine by inhibiting the sequential steps of cyclosporine binding and calcineurin inhibition. Acetylation at Lys-125 favors the interaction with TARDBP.

The protein localises to the cytoplasm. It localises to the secreted. The protein resides in the nucleus. It catalyses the reaction [protein]-peptidylproline (omega=180) = [protein]-peptidylproline (omega=0). With respect to regulation, binds cyclosporin A (CsA). CsA mediates some of its effects via an inhibitory action on PPIase. Its function is as follows. Catalyzes the cis-trans isomerization of proline imidic peptide bonds in oligopeptides. Exerts a strong chemotactic effect on leukocytes partly through activation of one of its membrane receptors BSG/CD147, initiating a signaling cascade that culminates in MAPK/ERK activation. Activates endothelial cells (ECs) in a proinflammatory manner by stimulating activation of NF-kappa-B and ERK, JNK and p38 MAP-kinases and by inducing expression of adhesion molecules including SELE and VCAM1. Induces apoptosis in ECs by promoting the FOXO1-dependent expression of CCL2 and BCL2L11 which are involved in EC chemotaxis and apoptosis. In response to oxidative stress, initiates proapoptotic and antiapoptotic signaling in ECs via activation of NF-kappa-B and AKT1 and up-regulation of antiapoptotic protein BCL2. Negatively regulates MAP3K5/ASK1 kinase activity, autophosphorylation and oxidative stress-induced apoptosis mediated by MAP3K5/ASK1. Necessary for the assembly of TARDBP in heterogeneous nuclear ribonucleoprotein (hnRNP) complexes and regulates TARDBP binding to RNA UG repeats and TARDBP-dependent expression of HDAC6, ATG7 and VCP which are involved in clearance of protein aggregates. Plays an important role in platelet activation and aggregation. Regulates calcium mobilization and integrin ITGA2B:ITGB3 bidirectional signaling via increased ROS production as well as by facilitating the interaction between integrin and the cell cytoskeleton. Binds heparan sulfate glycosaminoglycans. The chain is Peptidyl-prolyl cis-trans isomerase A (PPIA) from Symphalangus syndactylus (Siamang).